The chain runs to 292 residues: 2-(5''-triphosphoribosyl)-3'-dephosphocoenzyme-A synthase (292 aa).

This sequence belongs to the CitG/MdcB family.

It catalyses the reaction 3'-dephospho-CoA + ATP = 2'-(5''-triphospho-alpha-D-ribosyl)-3'-dephospho-CoA + adenine. In terms of biological role, catalyzes the formation of 2-(5''-triphosphoribosyl)-3'-dephosphocoenzyme-A, the precursor of the prosthetic group of the holo-acyl carrier protein (gamma chain) of citrate lyase, from ATP and dephospho-CoA. This chain is 2-(5''-triphosphoribosyl)-3'-dephosphocoenzyme-A synthase, found in Escherichia coli O6:K15:H31 (strain 536 / UPEC).